The primary structure comprises 1217 residues: MTIPEKPQGVIWTDAQWQSIYATGQDVLVAAAAGSGKTAVLVERIIQKILRDGIDVDRLLVVTFTNLSAREMKHRVDQRIQEASIADPANAHLKNQRIKIHQAQISTLHSFCLKLIQQHYDVLNIDPNFRTSSEAENILLLEQTIDEVIEQHYDILDPAFIELTEQLSSDRSDDQFRMIIKQLYFFSVANPNPKNWLDQLVTPYEEEAQQAQLIQLLTDLSKVFITAAYDALNKAYDLFSMMDSVDKHLAVIEDERRLMGRVLEGGFIDIPYLTGHEFGARLPNVTAKIKEANEMMVDALEDAKLQYKKYKSLIDKVKSDYFSREADDLKADMQQLAPRVKYLARIVKDVMSEFNRKKRSKNILDFSDYEHFALQILTNEDGSPSEIAESYRQHFQEILVDEYQDTNRVQEKILSCIKTGDEHNGNLFMVGDVKQSIYKFRQADPSLFIEKYQRFTIDGDGTGRRIDLSQNFRSRKEVLSTTNYIFKHMMDEQVGEVKYDEAAQLYYGAPYDESDHPVNLKVLVEADQEHSDLTGSEQEAHFIVEQVKDILEHQKVYDMKTGSYRSATYKDIVILERSFGQARNLQQAFKNEDIPFHVNSREGYFEQTEVRLVLSFLRAIDNPLQDIYLVGLMRSVIYQFKEDELAQIRILSPNDDYFYQSIVNYINDEAADAILVDKLKMFLSDIQSYQQYSKDHPVYQLIDKFYNDHYVIQYFSGLIGGRGRRANLYGLFNKAIEFENSSFRGLYQFIRFIDELIERGKDFGEENVVGPNDNVVRMMTIHSSKGLEFPFVIYSGLSKDFNKRDLKQPVILNQQFGLGMDYFDVDKEMAFPSLASVAYRAVAEKELVSEEMRLVYVALTRAKEQLYLIGRVKNDKSLLELEQLSISGEHIAVNERLTSPNPFHLIYSILSKHQSASIPDDLKFEKDIAQIEDSSRPNVNISIVYFEDVSTETILDNDEYRSVNQLETMQNGNEDVKAQIKHQLDYRYPYVNDTKKPSKQSVSELKRQYETEESGTSYERVRQYRIGFSTYERPKFLSEQGKRKANEIGTLMHTVMQHLPFKKERISEVELHQYIDGLIDKHIIEADAKKDIRMDEIMTFINSELYSIIAEAEQVYRELPFVVNQALVDQLPQGDEDVSIIQGMIDLIFVKDGVHYFVDYKTDAFNRRRGMTDEEIGTQLKNKYKIQMKYYQNTLQTILNKEVKGYLYFFKFGTLQL.

A UvrD-like helicase ATP-binding domain is found at 10–475 (VIWTDAQWQS…IDLSQNFRSR (466 aa)). 31–38 (AAAGSGKT) provides a ligand contact to ATP. The region spanning 476–786 (KEVLSTTNYI…RMMTIHSSKG (311 aa)) is the UvrD-like helicase C-terminal domain.

Belongs to the helicase family. AddA subfamily. As to quaternary structure, heterodimer of AddA and AddB/RexB. Mg(2+) serves as cofactor.

The catalysed reaction is Couples ATP hydrolysis with the unwinding of duplex DNA by translocating in the 3'-5' direction.. It carries out the reaction ATP + H2O = ADP + phosphate + H(+). The heterodimer acts as both an ATP-dependent DNA helicase and an ATP-dependent, dual-direction single-stranded exonuclease. Recognizes the chi site generating a DNA molecule suitable for the initiation of homologous recombination. The AddA nuclease domain is required for chi fragment generation; this subunit has the helicase and 3' -&gt; 5' nuclease activities. The sequence is that of ATP-dependent helicase/nuclease subunit A from Staphylococcus aureus (strain USA300).